We begin with the raw amino-acid sequence, 426 residues long: Chaperone SurA (426 aa).

Residues 1–19 form the signal peptide; it reads MGRVLVTIFVLFWPIGSFA. 2 consecutive PpiC domains span residues 169–270 and 280–379; these read DAQY…KLLD and VTQT…QVLD.

Its subcellular location is the periplasm. The catalysed reaction is [protein]-peptidylproline (omega=180) = [protein]-peptidylproline (omega=0). Its function is as follows. Chaperone involved in the correct folding and assembly of outer membrane proteins. Recognizes specific patterns of aromatic residues and the orientation of their side chains, which are found more frequently in integral outer membrane proteins. May act in both early periplasmic and late outer membrane-associated steps of protein maturation. This Nitrosococcus oceani (strain ATCC 19707 / BCRC 17464 / JCM 30415 / NCIMB 11848 / C-107) protein is Chaperone SurA.